The sequence spans 423 residues: Serine--tRNA ligase (423 aa).

229-231 (TAE) serves as a coordination point for L-serine. ATP is bound at residue 260-262 (RRE). E283 serves as a coordination point for L-serine. 347-350 (EISS) serves as a coordination point for ATP. S383 is an L-serine binding site.

Belongs to the class-II aminoacyl-tRNA synthetase family. Type-1 seryl-tRNA synthetase subfamily. Homodimer. The tRNA molecule binds across the dimer.

It localises to the cytoplasm. The catalysed reaction is tRNA(Ser) + L-serine + ATP = L-seryl-tRNA(Ser) + AMP + diphosphate + H(+). It catalyses the reaction tRNA(Sec) + L-serine + ATP = L-seryl-tRNA(Sec) + AMP + diphosphate + H(+). The protein operates within aminoacyl-tRNA biosynthesis; selenocysteinyl-tRNA(Sec) biosynthesis; L-seryl-tRNA(Sec) from L-serine and tRNA(Sec): step 1/1. In terms of biological role, catalyzes the attachment of serine to tRNA(Ser). Is also able to aminoacylate tRNA(Sec) with serine, to form the misacylated tRNA L-seryl-tRNA(Sec), which will be further converted into selenocysteinyl-tRNA(Sec). The protein is Serine--tRNA ligase of Trichlorobacter lovleyi (strain ATCC BAA-1151 / DSM 17278 / SZ) (Geobacter lovleyi).